A 378-amino-acid chain; its full sequence is Myoglobin (378 aa).

H332 serves as a coordination point for heme.

It belongs to the indoleamine 2,3-dioxygenase family. As to quaternary structure, homodimer. Heme serves as cofactor.

Its function is as follows. Serves a reserve supply of oxygen and facilitates the movement of oxygen within muscles. The polypeptide is Myoglobin (Haliotis madaka (Giant abalone)).